A 240-amino-acid chain; its full sequence is Lipoprotein signal peptidase (240 aa).

4 consecutive transmembrane segments (helical) span residues 38-58 (LIWKISIILICAFIVLLTSFL), 73-93 (LIPGFLVINITGNTGVSFGTL), 98-118 (PSLVYFVQSIPIVLGFFVLLF), and 120-140 (SNYLLDIGVSLVFFGGLSNII). Residues Asp162 and Asp179 contribute to the active site. A helical transmembrane segment spans residues 177–197 (FPDTFVIIGMIFVGIQIIISF).

This sequence belongs to the peptidase A8 family.

It is found in the cell membrane. It catalyses the reaction Release of signal peptides from bacterial membrane prolipoproteins. Hydrolyzes -Xaa-Yaa-Zaa-|-(S,diacylglyceryl)Cys-, in which Xaa is hydrophobic (preferably Leu), and Yaa (Ala or Ser) and Zaa (Gly or Ala) have small, neutral side chains.. It participates in protein modification; lipoprotein biosynthesis (signal peptide cleavage). Its function is as follows. This protein specifically catalyzes the removal of signal peptides from prolipoproteins. The sequence is that of Lipoprotein signal peptidase from Malacoplasma penetrans (strain HF-2) (Mycoplasma penetrans).